The chain runs to 441 residues: MEISSHQSHLLEQLNEQRRQDVFCDCSILVEGKVFKAHRNVLFASSGYFKMLLSQNSKETSQPTTATFQTFSPDTFTVILDFVYSGKLSLTGQNVIEVMSAASFLQMTDVISVCKTFIKSSLDISEKEKDRYFSLSDKDTGSNGVERPSVYSSSWQEDGGSPRSHLSPDQGPAIVSGKPWNKYSYHPASQRSPQPPLAKHEQRKDPIKKTKHLRLPQPSEVVHFKSGKGDARTSDSGHHVSQSEEQVQVDAEVDPVSAGYPYSQGPEVASRSFPDNLPRLRFKCPYCTHVVKRKADLKRHLRCHTGERPYPCQACGKRFSRLDHLSSHFRTIHQACKLICRKCKRHVTDLTGQVVQEGTRRYRLCNECLTEVGMDSLPADLETEQHRVSPADGDKDCRWHLSEEENRSYVEIVEDGSADLVIQQVDDSEEEEEKEIKPNIR.

In terms of domain architecture, BTB spans 24–92; it reads CDCSILVEGK…VYSGKLSLTG (69 aa). Residues 135–248 are disordered; it reads LSDKDTGSNG…HVSQSEEQVQ (114 aa). Phosphoserine is present on residues Ser161 and Ser167. Glycyl lysine isopeptide (Lys-Gly) (interchain with G-Cter in SUMO2) cross-links involve residues Lys178, Lys182, and Lys199. Composition is skewed to basic and acidic residues over residues 198–208 and 227–242; these read AKHEQRKDPIK and GKGDARTSDSGHHVSQ. 2 C2H2-type zinc fingers span residues 282–304 and 310–333; these read FKCPYCTHVVKRKADLKRHLRCH and YPCQACGKRFSRLDHLSSHFRTIH. Lys437 is covalently cross-linked (Glycyl lysine isopeptide (Lys-Gly) (interchain with G-Cter in SUMO2)).

The protein resides in the nucleus. Its function is as follows. May be involved in transcriptional regulation. The sequence is that of Zinc finger and BTB domain-containing protein 8A (Zbtb8a) from Rattus norvegicus (Rat).